The chain runs to 101 residues: Small ubiquitin-related modifier 5 (101 aa).

A Required for PML-NB formation motif is present at residues 17 to 21 (IKDED). A Glycyl lysine isopeptide (Lys-Gly) (interchain with G-Cter in SUMO1P1/SUMO5) cross-link involves residue lysine 18. In terms of domain architecture, Ubiquitin-like spans 20–97 (EDIKLRVIGQ…IEVYQEQIGG (78 aa)). A Glycyl lysine isopeptide (Gly-Lys) (interchain with K-? in acceptor proteins) cross-link involves residue glycine 97. The propeptide occupies 98–101 (HSTV).

Belongs to the ubiquitin family. SUMO subfamily. As to quaternary structure, interacts with CBX4. Interacts with PIAS1. Found in a complex with SAE2. Interacts with UBE2I. Interacts with SP100. Interacts with HIPK2. Interacts with DAXX. Interacts with PML-RARA oncoprotein; PML-RARalpha outcompetes PML for SUMO1P1/SUMO5 conjugation. Post-translationally, cleavage of precursor form is necessary for function. Autosumoylated at Lys-18. As to expression, high expression levels in testes and peripheral blood leukocyte. Expressed also in lung, placenta, liver, spleen and thymus.

Its subcellular location is the nucleus. Its function is as follows. Ubiquitin-like protein that can be covalently attached to proteins as a monomer or as a lysine-linked polymer. Regulates the life cycle of promyelocytic leukemia nuclear bodies (PML-NBs). PolySUMO1P1/SUMO5 conjugation on 'Lys-160' of PML facilitates recruitment of PML-NB components, which enlarges PML-NB. SUMO1P1/SUMO5 also increases polySUMO2/3 conjugation of PML, resulting in RNF4-mediated disruption of PML-NBs. The polypeptide is Small ubiquitin-related modifier 5 (Homo sapiens (Human)).